Here is a 483-residue protein sequence, read N- to C-terminus: SET domain and MYND-type zinc finger protein 6 (483 aa).

The region spanning 4 to 228 is the SET domain; the sequence is PLIASVILPE…KDEQLFISYI (225 aa). Zn(2+) is bound by residues Cys49, Cys52, Cys62, Cys65, Cys71, Cys75, His83, and Cys87. Residues 49 to 87 form an MYND-type zinc finger; that stretch reads CSTCTEEKVKTQRCAACKIIHYCSKGCQKADWPFHKLEC.

It belongs to the class V-like SAM-binding methyltransferase superfamily.

The protein localises to the cytoplasm. It localises to the nucleus. The sequence is that of SET domain and MYND-type zinc finger protein 6 (set6) from Schizosaccharomyces pombe (strain 972 / ATCC 24843) (Fission yeast).